A 31-amino-acid polypeptide reads, in one-letter code: Cyclotide vico-A (31 aa).

The cyclopeptide (Gly-Asn) cross-link spans 1–31; that stretch reads GSIPCAESCVYIPCFTGIAGCSCKNKVCYYN. Disulfide bonds link C5/C21, C9/C23, and C14/C28.

This sequence belongs to the cyclotide family. Bracelet subfamily. Post-translationally, this is a cyclic peptide.

In terms of biological role, probably participates in a plant defense mechanism. The polypeptide is Cyclotide vico-A (Viola cotyledon (Violeta)).